The primary structure comprises 500 residues: Protein nucleotidyltransferase YdiU (500 aa).

8 residues coordinate ATP: G96, G98, R99, K119, D131, G132, R182, and R189. D258 acts as the Proton acceptor in catalysis. Residues N259 and D268 each contribute to the Mg(2+) site. D268 contacts ATP.

The protein belongs to the SELO family. The cofactor is Mg(2+). It depends on Mn(2+) as a cofactor.

It catalyses the reaction L-seryl-[protein] + ATP = 3-O-(5'-adenylyl)-L-seryl-[protein] + diphosphate. The catalysed reaction is L-threonyl-[protein] + ATP = 3-O-(5'-adenylyl)-L-threonyl-[protein] + diphosphate. It carries out the reaction L-tyrosyl-[protein] + ATP = O-(5'-adenylyl)-L-tyrosyl-[protein] + diphosphate. The enzyme catalyses L-histidyl-[protein] + UTP = N(tele)-(5'-uridylyl)-L-histidyl-[protein] + diphosphate. It catalyses the reaction L-seryl-[protein] + UTP = O-(5'-uridylyl)-L-seryl-[protein] + diphosphate. The catalysed reaction is L-tyrosyl-[protein] + UTP = O-(5'-uridylyl)-L-tyrosyl-[protein] + diphosphate. Its function is as follows. Nucleotidyltransferase involved in the post-translational modification of proteins. It can catalyze the addition of adenosine monophosphate (AMP) or uridine monophosphate (UMP) to a protein, resulting in modifications known as AMPylation and UMPylation. The polypeptide is Protein nucleotidyltransferase YdiU (Rhizobium etli (strain CIAT 652)).